Here is a 267-residue protein sequence, read N- to C-terminus: Potassium channel regulatory protein (267 aa).

Residues 5–74 (ELVTLNVGGK…LRTQQLLLPT (70 aa)) form the BTB domain.

As to quaternary structure, can form homooligomers. Interacts with KCNA1 (via cytoplasmic N-terminal domain) and KCNA4.

Its subcellular location is the endoplasmic reticulum. Inhibits potassium fluxes in cells. May regulate Kv1 family channel proteins by retaining a fraction of channels in endomembranes. The chain is Potassium channel regulatory protein (KCNRG) from Bos taurus (Bovine).